Here is a 374-residue protein sequence, read N- to C-terminus: S-adenosylmethionine:tRNA ribosyltransferase-isomerase (374 aa).

Belongs to the QueA family. In terms of assembly, monomer.

The protein localises to the cytoplasm. It carries out the reaction 7-aminomethyl-7-carbaguanosine(34) in tRNA + S-adenosyl-L-methionine = epoxyqueuosine(34) in tRNA + adenine + L-methionine + 2 H(+). It functions in the pathway tRNA modification; tRNA-queuosine biosynthesis. Its function is as follows. Transfers and isomerizes the ribose moiety from AdoMet to the 7-aminomethyl group of 7-deazaguanine (preQ1-tRNA) to give epoxyqueuosine (oQ-tRNA). The chain is S-adenosylmethionine:tRNA ribosyltransferase-isomerase from Prochlorococcus marinus (strain AS9601).